A 277-amino-acid chain; its full sequence is Anamorsin homolog 2 (277 aa).

The interval 1 to 141 (MDTQPIVLVI…RKPAWDTGSS (141 aa)) is N-terminal SAM-like domain. The linker stretch occupies residues 141 to 186 (SFKLKKKVAQKPANVVTFDIPAFKVQLGDDLDDLIDEDSLLTEEDL). Positions 197, 207, 210, and 212 each coordinate [2Fe-2S] cluster. Residues 197 to 212 (CEVGKAGRKACKNCTC) are fe-S binding site A. [4Fe-4S] cluster-binding residues include Cys238, Cys241, Cys249, and Cys252. 2 short sequence motifs (cx2C motif) span residues 238–241 (CGSC) and 249–252 (CSTC). The segment at 238–252 (CGSCGLGDAFRCSTC) is fe-S binding site B.

Belongs to the anamorsin family. In terms of assembly, monomer. The cofactor is [2Fe-2S] cluster. It depends on [4Fe-4S] cluster as a cofactor.

The protein localises to the cytoplasm. It localises to the mitochondrion intermembrane space. Its function is as follows. Component of the cytosolic iron-sulfur (Fe-S) protein assembly (CIA) machinery. Required for the maturation of extramitochondrial Fe-S proteins. Part of an electron transfer chain functioning in an early step of cytosolic Fe-S biogenesis, facilitating the de novo assembly of a [4Fe-4S] cluster on the cytosolic Fe-S scaffold complex. Electrons are transferred from NADPH via a FAD- and FMN-containing diflavin oxidoreductase. Together with the diflavin oxidoreductase, also required for the assembly of the diferric tyrosyl radical cofactor of ribonucleotide reductase (RNR), probably by providing electrons for reduction during radical cofactor maturation in the catalytic small subunit. This chain is Anamorsin homolog 2, found in Picea sitchensis (Sitka spruce).